The primary structure comprises 178 residues: Acireductone dioxygenase (178 aa).

4 residues coordinate Fe(2+): His81, His83, Glu87, and His126. His81, His83, Glu87, and His126 together coordinate Ni(2+).

This sequence belongs to the acireductone dioxygenase (ARD) family. Fe(2+) serves as cofactor. Ni(2+) is required as a cofactor.

The protein resides in the cytoplasm. Its subcellular location is the nucleus. It carries out the reaction 1,2-dihydroxy-5-(methylsulfanyl)pent-1-en-3-one + O2 = 4-methylsulfanyl-2-oxobutanoate + formate + 2 H(+). The catalysed reaction is 1,2-dihydroxy-5-(methylsulfanyl)pent-1-en-3-one + O2 = 3-(methylsulfanyl)propanoate + CO + formate + 2 H(+). The protein operates within amino-acid biosynthesis; L-methionine biosynthesis via salvage pathway; L-methionine from S-methyl-5-thio-alpha-D-ribose 1-phosphate: step 5/6. Functionally, catalyzes 2 different reactions between oxygen and the acireductone 1,2-dihydroxy-3-keto-5-methylthiopentene (DHK-MTPene) depending upon the metal bound in the active site. Fe-containing acireductone dioxygenase (Fe-ARD) produces formate and 2-keto-4-methylthiobutyrate (KMTB), the alpha-ketoacid precursor of methionine in the methionine recycle pathway. Ni-containing acireductone dioxygenase (Ni-ARD) produces methylthiopropionate, carbon monoxide and formate, and does not lie on the methionine recycle pathway. This is Acireductone dioxygenase (adi1) from Neurospora crassa (strain ATCC 24698 / 74-OR23-1A / CBS 708.71 / DSM 1257 / FGSC 987).